We begin with the raw amino-acid sequence, 219 residues long: MEYNRLIDHTLLKADATVEQIEKLCKEALQYNFFSVCVNSAFVPLAKSFLEGSDVKVATTIGFPLGASATAVKAFEVEQALKEGADEFDMVINVGWLKSKLYRLVHEDIAEVVKAAGGKVVKVIIETCYLTDDEKKIASSIAAAAGAHYVKTSTGFGTGGATVEDVQLIRSVVGPNIGVKASGGIRDAATLKAMVDAGANRIGASASVKIMEELRIEGN.

Asp-89 serves as the catalytic Proton donor/acceptor. Lys-151 acts as the Schiff-base intermediate with acetaldehyde in catalysis. Residue Lys-180 is the Proton donor/acceptor of the active site.

Belongs to the DeoC/FbaB aldolase family. DeoC type 1 subfamily.

The protein localises to the cytoplasm. The catalysed reaction is 2-deoxy-D-ribose 5-phosphate = D-glyceraldehyde 3-phosphate + acetaldehyde. It participates in carbohydrate degradation; 2-deoxy-D-ribose 1-phosphate degradation; D-glyceraldehyde 3-phosphate and acetaldehyde from 2-deoxy-alpha-D-ribose 1-phosphate: step 2/2. Catalyzes a reversible aldol reaction between acetaldehyde and D-glyceraldehyde 3-phosphate to generate 2-deoxy-D-ribose 5-phosphate. The sequence is that of Deoxyribose-phosphate aldolase from Coprothermobacter proteolyticus (strain ATCC 35245 / DSM 5265 / OCM 4 / BT).